Consider the following 515-residue polypeptide: Dimethylnonatriene synthase (515 aa).

Residues 3–23 (FLFSTLQLSLFSLALVIFGYI) traverse the membrane as a helical segment. His219 is a substrate binding site. A Glycyl lysine isopeptide (Lys-Gly) (interchain with G-Cter in ubiquitin) cross-link involves residue Lys252. Cys452 is a heme binding site.

This sequence belongs to the cytochrome P450 family. The cofactor is heme. Expressed in stems, flower peduncles, receptacle of developing and mature flowers and in stigma of mature opening flower buds.

It localises to the membrane. The catalysed reaction is (3S,6E)-nerolidol + reduced [NADPH--hemoprotein reductase] + O2 = (3E)-4,8-dimethylnona-1,3,7-triene + but-3-en-2-one + oxidized [NADPH--hemoprotein reductase] + 2 H2O + H(+). It carries out the reaction (6E,10E)-geranyllinalool + reduced [NADPH--hemoprotein reductase] + O2 = (3E,7E)-4,8,12-trimethyltrideca 1,3,7,11-tetraene + but-3-en-2-one + oxidized [NADPH--hemoprotein reductase] + 2 H2O + H(+). Its pathway is secondary metabolite biosynthesis; terpenoid biosynthesis. Functionally, involved in the biosynthesis of homoterpenes, attractants of herbivores parasitoids and predators (e.g. predatory mites and parasitoid wasps). Catalyzes the conversion of the C20 (E,E)-geranyllinalool to C16-homoterpene 4,8,12-trimethyltrideca-1,3,7,11-tetraene (TMTT) of the C15 (E)-nerolidol to C11-homoterpene (E)-4,8-dimethyl-1,3,7-nonatriene (DMNT); these volatile compounds are produced upon insect herbivore attack and emitted from flowers and vegetative tissues during herbivore feeding. Required during resistance responses to the fungus Alternaria brassicae. Prevents oviposition of the phloem-feeding insect cabbage whitefly (Aleyrodes proletella). This is Dimethylnonatriene synthase from Arabidopsis thaliana (Mouse-ear cress).